The sequence spans 342 residues: tRNA N6-adenosine threonylcarbamoyltransferase (342 aa).

Residues His-114 and His-118 each coordinate Fe cation. Substrate contacts are provided by residues 136–140, Asp-169, Gly-182, Asp-186, and Asn-275; that span reads LVSGG. Fe cation is bound at residue Asp-301.

It belongs to the KAE1 / TsaD family. Fe(2+) serves as cofactor.

The protein resides in the cytoplasm. It carries out the reaction L-threonylcarbamoyladenylate + adenosine(37) in tRNA = N(6)-L-threonylcarbamoyladenosine(37) in tRNA + AMP + H(+). Its function is as follows. Required for the formation of a threonylcarbamoyl group on adenosine at position 37 (t(6)A37) in tRNAs that read codons beginning with adenine. Is involved in the transfer of the threonylcarbamoyl moiety of threonylcarbamoyl-AMP (TC-AMP) to the N6 group of A37, together with TsaE and TsaB. TsaD likely plays a direct catalytic role in this reaction. The polypeptide is tRNA N6-adenosine threonylcarbamoyltransferase (Streptococcus pyogenes serotype M4 (strain MGAS10750)).